The sequence spans 2170 residues: ATP-binding cassette sub-family A member 7 (2170 aa).

The chain crosses the membrane as a helical span at residues 22 to 42; that stretch reads PIQLVVELLWPLFLFFILVAV. The Extracellular segment spans residues 43 to 547; sequence RHSHPPLEHH…DVFLRVLSRS (505 aa). A disulfide bridge links C75 with C222. N309 carries N-linked (GlcNAc...) asparagine glycosylation. The next 6 membrane-spanning stretches (helical) occupy residues 548-568, 591-611, 624-644, 653-673, 679-699, and 733-753; these read LPLF…KAVV, LGWF…LVLV, VVVF…SFLL, LAAA…VLCV, LPLG…GFGC, and AFLL…EAVC. An ABC transporter 1 domain is found at 805–1036; it reads VSIRGLKKHF…LGCGYYLTLV (232 aa). ATP is bound at residue 839-846; that stretch reads GHNGAGKT. The helical transmembrane segment at 847–867 threads the bilayer; the sequence is TTLSILSGLFPPSSGSASILG. Positions 1044 to 1086 are disordered; the sequence is THDLKGDTEDPRREKKSGSEGKTADTVLTRDGPHRSSQVPAPD. Residues 1045–1066 are compositionally biased toward basic and acidic residues; it reads HDLKGDTEDPRREKKSGSEGKT. The chain crosses the membrane as a helical span at residues 1257-1277; the sequence is IVLPALFVGLALFFTLIVPPF. Topologically, residues 1278–1562 are extracellular; it reads GQYPPLQLSP…TLIASSVDVL (285 aa). An intrachain disulfide couples C1370 to C1384. Helical transmembrane passes span 1563-1583, 1609-1629, 1646-1666, 1674-1694, 1708-1728, and 1754-1774; these read VSIC…LVLI, FLWD…IFLA, LLLL…SFFF, VVLT…TFVL, ILKQ…LIDM, and IIGK…LITL. Residues 1818 to 2050 enclose the ABC transporter 2 domain; the sequence is LVLRDLTKVY…FGAGHTLTLR (233 aa). Residue 1852–1859 participates in ATP binding; it reads GVNGAGKT. A disordered region spans residues 2129–2170; it reads QGEEEEGSGQETETREVSTPGLQHPKRVSRFLEDPSSVETVI.

It belongs to the ABC transporter superfamily. ABCA family. In terms of processing, N-glycosylated. In terms of tissue distribution, expressed in blood cells. Also detected in brain and ovary tissues (at protein level). Expressed in platelet.

Its subcellular location is the cell membrane. It localises to the golgi apparatus membrane. The protein resides in the early endosome membrane. It is found in the cell projection. The protein localises to the ruffle membrane. Its subcellular location is the phagocytic cup. It localises to the cytoplasm. Functionally, ATP-binding cassette (ABC) transporter that plays a role in lipid homeostasis and macrophage-mediated phagocytosis. Binds APOA1 and may function in apolipoprotein-mediated phospholipid efflux from cells. May also mediate cholesterol efflux. May regulate cellular ceramide homeostasis during keratinocyte differentiation. Involved in lipid raft organization and CD1D localization on thymocytes and antigen-presenting cells, which plays an important role in natural killer T-cell development and activation. Plays a role in phagocytosis of apoptotic cells by macrophages. Macrophage phagocytosis is stimulated by APOA1 or APOA2, probably by stabilization of ABCA7. Also involved in phagocytic clearance of amyloid-beta by microglia cells and macrophages. Further limits amyloid-beta production by playing a role in the regulation of amyloid-beta A4 precursor protein (APP) endocytosis and/or processing. This chain is ATP-binding cassette sub-family A member 7 (Abca7), found in Rattus norvegicus (Rat).